A 210-amino-acid chain; its full sequence is LexA repressor (210 aa).

Positions 30 to 50 (RVEIAREIGFKSPNAAEEHLK) form a DNA-binding region, H-T-H motif. Active-site for autocatalytic cleavage activity residues include Ser-127 and Lys-164.

This sequence belongs to the peptidase S24 family. Homodimer.

It catalyses the reaction Hydrolysis of Ala-|-Gly bond in repressor LexA.. In terms of biological role, represses a number of genes involved in the response to DNA damage (SOS response), including recA and lexA. In the presence of single-stranded DNA, RecA interacts with LexA causing an autocatalytic cleavage which disrupts the DNA-binding part of LexA, leading to derepression of the SOS regulon and eventually DNA repair. This chain is LexA repressor, found in Actinobacillus pleuropneumoniae serotype 5b (strain L20).